A 515-amino-acid chain; its full sequence is Cytochrome P450 monooxygenase nsrP (515 aa).

Residues 20–40 (FGTAAFLAVLLSALAFLSYTP) traverse the membrane as a helical segment. Residues asparagine 84, asparagine 406, and asparagine 411 are each glycosylated (N-linked (GlcNAc...) asparagine). Cysteine 452 provides a ligand contact to heme.

It belongs to the cytochrome P450 family. The cofactor is heme.

The protein resides in the membrane. It functions in the pathway secondary metabolite biosynthesis. In terms of biological role, cytochrome P450 monooxygenase; part of the gene cluster that mediates the biosynthesis of the tetrahydroxanthone dimer neosartorin, which exhibits antibacterial activity. The two different monomeric units appear to be synthesized by the same set of enzymes, among which the Baeyer-Villiger monooxygenase nsrF is the key enzyme for the divergence of the biosynthetic routes. The pathway begins with the synthesis of atrochrysone thioester by the polyketide synthase nsrB. The atrochrysone carboxyl ACP thioesterase nsrC then breaks the thioester bond and releases the atrochrysone carboxylic acid from AacuL. Atrochrysone carboxylic acid is decarboxylated by the decarboxylase nsrE, and oxidized by the anthrone oxygenase nsrD to yield emodin. Emodin is then reduced to emodin hydroquinone by the oxidoreductase nsrR. A-ring reduction by the short chain dehydrogenase nsrJ, dehydration by the scytalone dehydratase-like protein nsrI and probable spontaneous re-oxidation, results in overall deoxygenation to chrysophanol. The Baeyer-Villiger monooxygenase nsrF accepts chrysophanol as a substrate to insert one oxygen atom at two different positions to yield the precursors of both monomric units. NsrF is promiscuous/flexible in interacting with the 2 (non methylated and methylated) aromatic rings of chrysophanol, thus diverging the biosynthetic pathway at this point. After the hydrolysis of the lactones, methylesterification by the methyltransferase nsrG yields respectively moniliphenone and 2,2',6'-trihydroxy-4-methyl-6-methoxya-cyldiphenylmethanone. The next steps are the hydroxylation by the FAD-dependent monooxygenase nsrK, followed by isomerization by the monooxygenase nsrQ. The short chain dehydrogenase/reductase nsrO then catalyzes the C-5 ketoreduction to give the xanthone skeleton of blennolide C and 5-acetylblennolide A. The acetyltransferase nsrL has a strict substrate specificity and uses only blennolide A but not blennolide C to yield 5-acetylblennolide A as the single-acetylated product. In the final step of the biosynthesis, the heterodimerization of the 2 xanthones, blennolide C and 5-acetylblennolide A, is catalyzed by the cytochrome P450 monooxygenase nsrP. NsrP can utilize at least three different xanthones as its substrates to perform the dimerization reaction. This Aspergillus novofumigatus (strain IBT 16806) protein is Cytochrome P450 monooxygenase nsrP.